The primary structure comprises 1483 residues: Ubiquitin fusion degradation protein 4 (1483 aa).

The interval Met-1–His-117 is disordered. The segment covering Asn-8–Asn-18 has biased composition (basic and acidic residues). Residues Glu-61–Asn-70 are compositionally biased toward acidic residues. Thr-87 is modified (phosphothreonine). Residue Lys-349 forms a Glycyl lysine isopeptide (Lys-Gly) (interchain with G-Cter in ubiquitin) linkage. The K-box stretch occupies residues Cys-1007 to Lys-1081. Residues Ala-1376–Ser-1483 form the HECT domain. The active-site Glycyl thioester intermediate is Cys-1450.

Belongs to the UPL family. K-HECT subfamily.

The enzyme catalyses S-ubiquitinyl-[E2 ubiquitin-conjugating enzyme]-L-cysteine + [acceptor protein]-L-lysine = [E2 ubiquitin-conjugating enzyme]-L-cysteine + N(6)-ubiquitinyl-[acceptor protein]-L-lysine.. Its function is as follows. E3 ubiquitin-protein ligase which accepts ubiquitin from an E2 ubiquitin-conjugating enzyme in the form of a thioester and then directly transfers the ubiquitin to targeted substrates. This is Ubiquitin fusion degradation protein 4 (UFD4) from Saccharomyces cerevisiae (strain ATCC 204508 / S288c) (Baker's yeast).